The chain runs to 124 residues: V-type proton ATPase subunit F 1 (124 aa).

S87 is modified (phosphoserine).

Belongs to the V-ATPase F subunit family. As to quaternary structure, V-ATPase is a heteromultimeric enzyme made up of two complexes: the ATP-hydrolytic V1 complex and the proton translocation V0 complex. The V1 complex consists of three catalytic AB heterodimers that form a heterohexamer, three peripheral stalks each consisting of EG heterodimers, one central rotor including subunits D and F, and the regulatory subunits C and H. The proton translocation complex V0 consists of the proton transport subunit a, a ring of proteolipid subunits c9c'', rotary subunit d, subunits e and f, and the accessory subunits VhaAC45 and ATP6AP2.

Functionally, subunit of the V1 complex of vacuolar(H+)-ATPase (V-ATPase), a multisubunit enzyme composed of a peripheral complex (V1) that hydrolyzes ATP and a membrane integral complex (V0) that translocates protons. V-ATPase is responsible for acidifying and maintaining the pH of intracellular compartments and in some cell types, is targeted to the plasma membrane, where it is responsible for acidifying the extracellular environment. The protein is V-type proton ATPase subunit F 1 (Vha14-1) of Drosophila melanogaster (Fruit fly).